Reading from the N-terminus, the 510-residue chain is NAD(P)H-quinone oxidoreductase subunit 2, chloroplastic (510 aa).

The next 13 helical transmembrane spans lie at 28–48 (DGSFIFPECILIFGLILLLII), 57–77 (IPWLYFISSTSLVMSITTLLF), 99–119 (IFQFLILLCSTLCIPLSVEYI), 124–144 (MALTEFLLFVLTATLGGMFLC), 149–169 (LITIFVAPECFSLCSYLLSGY), 183–203 (YLLMGGTSSSILVHGFSWLYG), 227–247 (PGISIALIFITVGIGFKLSPA), 295–315 (WHLLLEILAILSMILGNLIAI), 323–343 (MLAYSSIGQIGYVIIGIIVGD), 354–374 (YMLFYISMNLGTFACIVLFGL), 395–415 (ALSLALCLLSLGGLPPLAGFF), 418–438 (LYLFWCGWQAGLYLLVLIGLL), and 484–504 (MIVCVIASTIPGISMNPIIAI).

Belongs to the complex I subunit 2 family. NDH is composed of at least 16 different subunits, 5 of which are encoded in the nucleus.

The protein resides in the plastid. The protein localises to the chloroplast thylakoid membrane. It carries out the reaction a plastoquinone + NADH + (n+1) H(+)(in) = a plastoquinol + NAD(+) + n H(+)(out). The enzyme catalyses a plastoquinone + NADPH + (n+1) H(+)(in) = a plastoquinol + NADP(+) + n H(+)(out). NDH shuttles electrons from NAD(P)H:plastoquinone, via FMN and iron-sulfur (Fe-S) centers, to quinones in the photosynthetic chain and possibly in a chloroplast respiratory chain. The immediate electron acceptor for the enzyme in this species is believed to be plastoquinone. Couples the redox reaction to proton translocation, and thus conserves the redox energy in a proton gradient. This chain is NAD(P)H-quinone oxidoreductase subunit 2, chloroplastic, found in Silene latifolia (White campion).